The following is a 315-amino-acid chain: 4-hydroxy-3-methylbut-2-enyl diphosphate reductase (315 aa).

Position 12 (Cys-12) interacts with [4Fe-4S] cluster. (2E)-4-hydroxy-3-methylbut-2-enyl diphosphate contacts are provided by His-41 and His-74. The dimethylallyl diphosphate site is built by His-41 and His-74. Residues His-41 and His-74 each contribute to the isopentenyl diphosphate site. Cys-96 contributes to the [4Fe-4S] cluster binding site. His-124 lines the (2E)-4-hydroxy-3-methylbut-2-enyl diphosphate pocket. His-124 contributes to the dimethylallyl diphosphate binding site. Residue His-124 participates in isopentenyl diphosphate binding. Glu-126 acts as the Proton donor in catalysis. Position 168 (Thr-168) interacts with (2E)-4-hydroxy-3-methylbut-2-enyl diphosphate. Position 198 (Cys-198) interacts with [4Fe-4S] cluster. The (2E)-4-hydroxy-3-methylbut-2-enyl diphosphate site is built by Ser-226, Ser-227, Asn-228, and Ser-270. Positions 226, 227, 228, and 270 each coordinate dimethylallyl diphosphate. Isopentenyl diphosphate is bound by residues Ser-226, Ser-227, Asn-228, and Ser-270.

It belongs to the IspH family. The cofactor is [4Fe-4S] cluster.

The catalysed reaction is isopentenyl diphosphate + 2 oxidized [2Fe-2S]-[ferredoxin] + H2O = (2E)-4-hydroxy-3-methylbut-2-enyl diphosphate + 2 reduced [2Fe-2S]-[ferredoxin] + 2 H(+). The enzyme catalyses dimethylallyl diphosphate + 2 oxidized [2Fe-2S]-[ferredoxin] + H2O = (2E)-4-hydroxy-3-methylbut-2-enyl diphosphate + 2 reduced [2Fe-2S]-[ferredoxin] + 2 H(+). Its pathway is isoprenoid biosynthesis; dimethylallyl diphosphate biosynthesis; dimethylallyl diphosphate from (2E)-4-hydroxy-3-methylbutenyl diphosphate: step 1/1. It participates in isoprenoid biosynthesis; isopentenyl diphosphate biosynthesis via DXP pathway; isopentenyl diphosphate from 1-deoxy-D-xylulose 5-phosphate: step 6/6. Catalyzes the conversion of 1-hydroxy-2-methyl-2-(E)-butenyl 4-diphosphate (HMBPP) into a mixture of isopentenyl diphosphate (IPP) and dimethylallyl diphosphate (DMAPP). Acts in the terminal step of the DOXP/MEP pathway for isoprenoid precursor biosynthesis. This chain is 4-hydroxy-3-methylbut-2-enyl diphosphate reductase, found in Azotobacter vinelandii (strain DJ / ATCC BAA-1303).